Reading from the N-terminus, the 468-residue chain is 23S rRNA (uracil(1939)-C(5))-methyltransferase RlmD (468 aa).

The 59-residue stretch at 12–70 folds into the TRAM domain; sequence SKQLSPKLSLNVTQLDHLGAGMAQHQGKVVFIPQALPGERVSVQLTDQKKSFAKAKLIK. Cysteine 83, cysteine 89, cysteine 92, and cysteine 174 together coordinate [4Fe-4S] cluster. 6 residues coordinate S-adenosyl-L-methionine: glutamine 296, phenylalanine 325, asparagine 330, glutamate 351, aspartate 378, and aspartate 398. Residue cysteine 424 is the Nucleophile of the active site.

It belongs to the class I-like SAM-binding methyltransferase superfamily. RNA M5U methyltransferase family. RlmD subfamily.

The catalysed reaction is uridine(1939) in 23S rRNA + S-adenosyl-L-methionine = 5-methyluridine(1939) in 23S rRNA + S-adenosyl-L-homocysteine + H(+). Catalyzes the formation of 5-methyl-uridine at position 1939 (m5U1939) in 23S rRNA. This Shewanella denitrificans (strain OS217 / ATCC BAA-1090 / DSM 15013) protein is 23S rRNA (uracil(1939)-C(5))-methyltransferase RlmD.